Consider the following 233-residue polypeptide: Protein Thf1 (233 aa).

A coiled-coil region spans residues 183-205; the sequence is DKLSKDLELYRSNLDKMTQALAV. Residues 213 to 233 form a disordered region; sequence DRKKREQRQQQASTPVAPPNE.

The protein belongs to the THF1 family.

In terms of biological role, may be involved in photosynthetic membrane biogenesis. The polypeptide is Protein Thf1 (Trichormus variabilis (strain ATCC 29413 / PCC 7937) (Anabaena variabilis)).